The primary structure comprises 520 residues: Putative transporter svop-1 (520 aa).

Over 1-85 (MGDKAILTEV…LGFGRFQLKL (85 aa)) the chain is Cytoplasmic. Residues 86–106 (SILTGMAWMADAMEMMLLSLI) form a helical membrane-spanning segment. Residues 107 to 120 (SPALACEWGISSVQ) lie on the Extracellular side of the membrane. Residues 121–141 (QALVTTCVFSGMMLSSTFWGK) traverse the membrane as a helical segment. The Cytoplasmic segment spans residues 142–157 (ICDRFGRRKGLTFSTL). The chain crosses the membrane as a helical span at residues 158 to 178 (VACIMGVISGMSPHFYVLLFF). Arg-179 is a topological domain (extracellular). A helical membrane pass occupies residues 180-200 (GLTGFGIGGVPQSVTLYAEFL). The Cytoplasmic portion of the chain corresponds to 201–208 (PTAQRAKC). The helical transmembrane segment at 209 to 229 (VVLIESFWAIGAVFEALLAYF) threads the bilayer. Topologically, residues 230-237 (VMESFGWR) are extracellular. The chain crosses the membrane as a helical span at residues 238-258 (ALMFLSSLPLGIFAVASFWLP). Residues 259 to 319 (ESARFDMASG…LLSPDLRKTT (61 aa)) are Cytoplasmic-facing. A helical membrane pass occupies residues 320-340 (ILLWCIWAITAFSYYGMVLFT). Residues 341–372 (TVLFQSHDECHGGLFSNGTQMEVCQPLTRSDY) lie on the Extracellular side of the membrane. A helical transmembrane segment spans residues 373 to 393 (FDLLSTTLAEFPGLIITVLII). Residues 394-410 (EWFGRKKTMALEYAVFA) lie on the Cytoplasmic side of the membrane. The chain crosses the membrane as a helical span at residues 411–431 (IFTFLLYFCLDRFTVTVLIFV). The Extracellular portion of the chain corresponds to 432-434 (ARA). Residues 435 to 455 (FISGAFQCAYVYTPEVYPTTL) traverse the membrane as a helical segment. Residues 456–461 (RAVGLG) lie on the Cytoplasmic side of the membrane. The chain crosses the membrane as a helical span at residues 462 to 487 (TCSAMARIGAIVTPFIAQVASEKSLS). Residues 488–489 (LP) lie on the Extracellular side of the membrane. Residues 490-509 (IGIYGTAAILGLIASLSLPI) traverse the membrane as a helical segment. Over 510 to 520 (ETKGRQMMDSH) the chain is Cytoplasmic.

This sequence belongs to the major facilitator superfamily.

It localises to the membrane. The protein is Putative transporter svop-1 of Caenorhabditis elegans.